We begin with the raw amino-acid sequence, 36 residues long: Photosystem I reaction center subunit VIII (36 aa).

A helical membrane pass occupies residues 9–29 (ISVPLVGLVFPAITMVLSFIY).

Belongs to the PsaI family.

The protein resides in the plastid. It localises to the chloroplast thylakoid membrane. May help in the organization of the PsaL subunit. In Huperzia lucidula (Shining clubmoss), this protein is Photosystem I reaction center subunit VIII.